A 721-amino-acid polypeptide reads, in one-letter code: MMTSLQLETSLPAVEEQVQREKDNDSAEDSHTASTTPTRIPHPAVARFRRSASLRLRGNPAELGLRAEHCPAGGGGFSSRAKLTAIPSSLETRSHPVHLRRNRSWCNLGHKTEQEPEVEASTEALCNAAQCLSLDKEALAPKVGNSSMANGKPRNLSLQLNGGSDISSSGTSSSSSNNKESSPRTTRTPRTPQTPQTPQTPASGVAASVAETPHSCIRQGNCVKANQVKLSTLHESKISPRTPPVTPDSPSTYLDDDIDSMYSFATTTSGRSTMSCEHPYVARNGTTFSGRKMKYVVHCSNYAGQVGPDYLTPTQRAQRQIRRLKELLCIARQDLEQKDTELLRLTREVVELRLFKASLSSPEERSASSDAVTVREAELKTSQDVSPIVDMVDEGNAKGSPRHLSRQQQQQANHSLQAMQMSAEMQSSYADSGHFEDLTMSSVHSKDSQTQSEACGTATPDGEADVGCGAGGDSASNLENYELQRQELISMYEHRIEELIRSQDSATSDLKRSHNDKVEALLQKLAECNTRYSDMVPDYEQAKQRIRELEKQLEDLQRKLIEHEEKQNKMYLHMYQQGQEAERISRADQALDLAQRQPESKVSINELLHQLQSTQDELENIRASECRMRECGSNHALLTAKEAISLWVLGARKTIYRRLLEAQKNRTHVDPEVTLQFLKSAIFYFLTDKENSQGHLQAIESILEFTDAEKQKISAANRTPK.

Disordered regions lie at residues Met-1–His-42, Val-143–Ala-210, Ser-360–Leu-379, Asp-393–Ser-428, and Ser-441–Gly-471. Basic and acidic residues predominate over residues Gln-17–His-31. The span at Asn-161–Pro-201 shows a compositional bias: low complexity. Residues Pro-362–Leu-379 show a composition bias toward basic and acidic residues. Residues Arg-406 to Gln-420 are compositionally biased toward low complexity. Residues Ser-441–Ala-454 show a composition bias toward polar residues. Residues Lys-511–Lys-569 adopt a coiled-coil conformation. The 49-residue stretch at His-668 to Ala-716 folds into the GRIP domain.

In terms of tissue distribution, expressed in the third antennal segment and the maxillary palp, with increased expression near the cuticle of both olfactory organs. Also detected in the second antenna segment. In the brain, expressed in the central nervous system, with high levels of expression in the visual system including the retina and optic lobe, and uniform expression in the cortex. Detected in the thorax and abdomen, with increased expression in the ventral ganglion. In males, detected in the reproductive tract including the ejaculatory bulb and testis.

Its function is as follows. In adult males, modulates sexual behavior by playing a role in sex discrimination and maintaining normal levels of sexual activity towards both males and females. The protein is Protein quick-to-court of Drosophila melanogaster (Fruit fly).